Reading from the N-terminus, the 224-residue chain is Ribose-5-phosphate isomerase A (224 aa).

Residues 26–29 (TGST), 81–84 (DGAD), and 94–97 (KGGG) contribute to the substrate site. Glu103 (proton acceptor) is an active-site residue. Lys121 contacts substrate.

The protein belongs to the ribose 5-phosphate isomerase family. Homodimer.

It catalyses the reaction aldehydo-D-ribose 5-phosphate = D-ribulose 5-phosphate. It functions in the pathway carbohydrate degradation; pentose phosphate pathway; D-ribose 5-phosphate from D-ribulose 5-phosphate (non-oxidative stage): step 1/1. Catalyzes the reversible conversion of ribose-5-phosphate to ribulose 5-phosphate. The sequence is that of Ribose-5-phosphate isomerase A from Listeria monocytogenes serotype 4b (strain F2365).